Consider the following 141-residue polypeptide: NADPH-dependent 7-cyano-7-deazaguanine reductase (141 aa).

Residue cysteine 56 is the Thioimide intermediate of the active site. Catalysis depends on aspartate 63, which acts as the Proton donor. Substrate-binding positions include 78–80 (VEL) and 97–98 (HE).

This sequence belongs to the GTP cyclohydrolase I family. QueF type 1 subfamily.

It localises to the cytoplasm. The enzyme catalyses 7-aminomethyl-7-carbaguanine + 2 NADP(+) = 7-cyano-7-deazaguanine + 2 NADPH + 3 H(+). Its pathway is tRNA modification; tRNA-queuosine biosynthesis. Catalyzes the NADPH-dependent reduction of 7-cyano-7-deazaguanine (preQ0) to 7-aminomethyl-7-deazaguanine (preQ1). The protein is NADPH-dependent 7-cyano-7-deazaguanine reductase of Trichodesmium erythraeum (strain IMS101).